A 158-amino-acid polypeptide reads, in one-letter code: Transcription elongation factor GreA (158 aa).

A coiled-coil region spans residues 45 to 73 (AEYHAAREQQSFIEGRIKQLESELSHAEI).

This sequence belongs to the GreA/GreB family.

Its function is as follows. Necessary for efficient RNA polymerase transcription elongation past template-encoded arresting sites. The arresting sites in DNA have the property of trapping a certain fraction of elongating RNA polymerases that pass through, resulting in locked ternary complexes. Cleavage of the nascent transcript by cleavage factors such as GreA or GreB allows the resumption of elongation from the new 3'terminus. GreA releases sequences of 2 to 3 nucleotides. The sequence is that of Transcription elongation factor GreA from Xanthomonas axonopodis pv. citri (strain 306).